Here is a 250-residue protein sequence, read N- to C-terminus: Testis-expressed protein 101 (250 aa).

A signal peptide spans 1–25 (MGACRIQYILLVFLLIASHWTLVQN). Residues asparagine 45, asparagine 110, asparagine 134, and asparagine 160 are each glycosylated (N-linked (GlcNAc...) asparagine). The UPAR/Ly6 domain occupies 141 to 215 (CPTCLALEPC…VKETCSYQSF (75 aa)). A lipid anchor (GPI-anchor amidated glycine) is attached at glycine 224. Positions 225–250 (ASWMPTSLWVLELLLPALSLPLIYFP) are cleaved as a propeptide — removed in mature form.

As to quaternary structure, interacts with VAMP3. Interacts with LY6K. Interacts with DPEP3; co-localized on the cell surface of spermatocytes, spermatids, and testicular spermatozoa, co-localized only in cytoplasmic droplets of caput and corpus epididymal sperm. Interacts with ADAM5. N-glycosylated; by high mannose and/or biantennary complex and/or certain types of hybrid oligosaccharides; possesses different oligosaccharides chains according to its subcellular localization in the testis. In terms of processing, sheds from membrane raft by ACE and released from the cell surface of epididymal sperm while it passes through the caput epididymis leading to disappearance of TEX101 on spermatozoa; is essential to produce fertile spermatozoa. In terms of tissue distribution, detected in testis.

The protein resides in the cell membrane. Its subcellular location is the membrane raft. It localises to the cytoplasmic vesicle. It is found in the secretory vesicle. The protein localises to the acrosome. The protein resides in the secreted. Plays a role in fertilization by controlling binding of sperm to zona pellucida and migration of spermatozoa into the oviduct. May play a role in signal transduction and promote protein tyrosine phosphorylation. The polypeptide is Testis-expressed protein 101 (Rattus norvegicus (Rat)).